The following is a 598-amino-acid chain: Nicotinamide riboside transporter 1 (598 aa).

The next 11 membrane-spanning stretches (helical) occupy residues 48–68 (LAYW…SAAL), 71–91 (GLSY…TIIF), 112–132 (FVFG…MSIV), 174–194 (LVGF…KPYH), 197–217 (YLLI…VIYL), 241–261 (AWAW…GSTN), 273–293 (LAIW…VPIF), 372–392 (GALF…YNSS), 395–415 (FLTV…VMIC), 447–467 (AIVA…WEVN), and 484–504 (SFFS…FFPF). 2 positions are modified to phosphoserine: Ser560 and Ser572.

The protein belongs to the purine-cytosine permease (2.A.39) family.

The protein localises to the cell membrane. Its function is as follows. High-affinity pH-dependent nicotinamide riboside transporter which also transports thiamine with low affinity. Involved in 5-fluorocytosine sensitivity. The protein is Nicotinamide riboside transporter 1 (NRT1) of Saccharomyces cerevisiae (strain ATCC 204508 / S288c) (Baker's yeast).